We begin with the raw amino-acid sequence, 304 residues long: MGRAEAGTPKAISNALKSKGLQRLRWYCSACQKQMRDENGFKCHTQSEGHIRQMNVIAMNPGKRIQDFSNQFLRDFISLLRTAHGEKKIHFNQFYQEYIRDKNHVHMNATRWHTLSEFCKFLGRQGMCRVEENEKGFFISYIDKNPANILRNEANKKRERQEKSDEEQRLRLLDEQIKRAYESAQNNEDNKDGSSREQPVLHEIDLSKKGNPIQLNLSSSSDSHSAQNEFFQTRNTPTFSFSSSSSQTSLKHKPKNVFAELNKSRKKNNKDSLDQGQNVKRPRSAVEDIIAQETMREKRRNIKL.

A C2H2-type zinc finger spans residues 26 to 50; it reads WYCSACQKQMRDENGFKCHTQSEGH. Disordered stretches follow at residues 204–228 and 261–291; these read IDLSKKGNPIQLNLSSSSDSHSAQN and LNKSRKKNNKDSLDQGQNVKRPRSAVEDIIA.

It belongs to the KIN17 family.

It localises to the nucleus. It is found in the nucleolus. In Schizosaccharomyces pombe (strain 972 / ATCC 24843) (Fission yeast), this protein is KIN17-like protein.